The primary structure comprises 65 residues: Kappa-scoloptoxin(04)-Ssd1a (65 aa).

The N-terminal stretch at 1 to 24 (MKKTCVVSVFLVLLLLKFHDLSMG) is a signal peptide. The propeptide occupies 25-36 (EEISPLKKVAPR). Cystine bridges form between Cys42–Cys53 and Cys47–Cys60.

As to expression, expressed by the venom gland.

It localises to the secreted. Voltage-gated potassium channel inhibitor. This chain is Kappa-scoloptoxin(04)-Ssd1a, found in Scolopendra dehaani (Thai centipede).